A 372-amino-acid chain; its full sequence is Transaldolase 2 (372 aa).

Lysine 140 serves as the catalytic Schiff-base intermediate with substrate.

This sequence belongs to the transaldolase family. Type 2 subfamily.

The protein localises to the cytoplasm. The catalysed reaction is D-sedoheptulose 7-phosphate + D-glyceraldehyde 3-phosphate = D-erythrose 4-phosphate + beta-D-fructose 6-phosphate. It participates in carbohydrate degradation; pentose phosphate pathway; D-glyceraldehyde 3-phosphate and beta-D-fructose 6-phosphate from D-ribose 5-phosphate and D-xylulose 5-phosphate (non-oxidative stage): step 2/3. Transaldolase is important for the balance of metabolites in the pentose-phosphate pathway. This is Transaldolase 2 from Streptomyces avermitilis (strain ATCC 31267 / DSM 46492 / JCM 5070 / NBRC 14893 / NCIMB 12804 / NRRL 8165 / MA-4680).